The primary structure comprises 915 residues: Bifunctional uridylyltransferase/uridylyl-removing enzyme (915 aa).

The tract at residues 1–360 (MFNCAVTAID…PDEERPKKQP (360 aa)) is uridylyltransferase. Residues 361 to 731 (INARFNQVGE…EHRELALDAV (371 aa)) form a uridylyl-removing region. An HD domain is found at 478–594 (VDAHTLFLIR…TLFADLVGNV (117 aa)). ACT domains are found at residues 732-817 (QVFV…RIPR) and 840-915 (IMSL…NDSI).

The protein belongs to the GlnD family. Mg(2+) is required as a cofactor.

The catalysed reaction is [protein-PII]-L-tyrosine + UTP = [protein-PII]-uridylyl-L-tyrosine + diphosphate. It carries out the reaction [protein-PII]-uridylyl-L-tyrosine + H2O = [protein-PII]-L-tyrosine + UMP + H(+). Uridylyltransferase (UTase) activity is inhibited by glutamine, while glutamine activates uridylyl-removing (UR) activity. In terms of biological role, modifies, by uridylylation and deuridylylation, the PII regulatory proteins (GlnB and homologs), in response to the nitrogen status of the cell that GlnD senses through the glutamine level. Under low glutamine levels, catalyzes the conversion of the PII proteins and UTP to PII-UMP and PPi, while under higher glutamine levels, GlnD hydrolyzes PII-UMP to PII and UMP (deuridylylation). Thus, controls uridylylation state and activity of the PII proteins, and plays an important role in the regulation of nitrogen assimilation and metabolism. The protein is Bifunctional uridylyltransferase/uridylyl-removing enzyme of Psychrobacter arcticus (strain DSM 17307 / VKM B-2377 / 273-4).